Consider the following 120-residue polypeptide: Large ribosomal subunit protein bL17 (120 aa).

Belongs to the bacterial ribosomal protein bL17 family. As to quaternary structure, part of the 50S ribosomal subunit. Contacts protein L32.

The protein is Large ribosomal subunit protein bL17 of Mesomycoplasma hyopneumoniae (strain 7448) (Mycoplasma hyopneumoniae).